The sequence spans 254 residues: MTTAALKRDEILLLFDVDGTLTMPRSVVTPEFEEFFYSRVKPRATIGIVGGSDLEKMFEQLNGRKILNEFDFIFPENGLVQIEGGKEVGKQNIIMHLGEETVKRFINFVLRYLSELDVPIKRGTFIEFRNGMMNVCPIGRQCTREERNMFAEYDIEHKVREKMIKDLKQEFADVDLTYSIGGQISFDVFPHGWDKTYCLRHIEAHYKFKEIHFFGDKTEPGGNDYEIYSDPRTISHRVYTPKDTQRILTEILEL.

Catalysis depends on Asp-16, which acts as the Nucleophile. Mg(2+) contacts are provided by Asp-16 and Asp-18. The Proton donor/acceptor role is filled by Asp-18. The alpha-D-mannose 1-phosphate site is built by Arg-25, Arg-129, Arg-140, Arg-147, Ser-185, and Asp-187. Mg(2+) contacts are provided by Asp-216, Tyr-228, Asp-230, and Thr-233.

Belongs to the eukaryotic PMM family. As to quaternary structure, homodimer.

It localises to the cytoplasm. The catalysed reaction is alpha-D-mannose 1-phosphate = D-mannose 6-phosphate. The protein operates within nucleotide-sugar biosynthesis; GDP-alpha-D-mannose biosynthesis; alpha-D-mannose 1-phosphate from D-fructose 6-phosphate: step 2/2. Functionally, involved in the synthesis of the GDP-mannose and dolichol-phosphate-mannose required for a number of critical mannosyl transfer reactions. Required for maintaining N-linked glycoprotein glycosylation at the neuromuscular junction (NMJ) synaptomatrix, and thus acts in multiple pathways that prevent NMJ structural overgrowth, restrict synaptic bouton differentiation, and limit NMJ neurotransmission strength, in order to maintain viability, coordinate movement, and in adults ensure correct wing positioning. Acts in the NMJ trans-synaptic Wg pathway via glycosylation of synaptic Mmp2 which enables dlp/wg signaling during development. The polypeptide is Phosphomannomutase (Drosophila melanogaster (Fruit fly)).